Here is a 307-residue protein sequence, read N- to C-terminus: Plastid division protein PDV2 (307 aa).

M1 is modified (N-acetylmethionine). Residues 1-213 (MEDEEGIGLI…SGGSSHGVIR (213 aa)) lie on the Cytoplasmic side of the membrane. The tract at residues 28 to 66 (SSTTVSDNGDGNEDLSPGEGRKSEIIGNQDKDFDSISSE) is disordered. The span at 46-61 (EGRKSEIIGNQDKDFD) shows a compositional bias: basic and acidic residues. At S50 the chain carries Phosphoserine. Residues 76–103 (LLRIRDALEALESQLASLQNLRQRQQYE) are a coiled coil. The disordered stretch occupies residues 174 to 206 (HLPSKKKSDANGFGSGHVRNEAEAKSPNGGSGG). A helical transmembrane segment spans residues 214–234 (FLGSVAKIVLPIIGVISLLSA). The Chloroplast intermembrane portion of the chain corresponds to 235-307 (SGYGPEMRKR…AKRDVTYGYG (73 aa)). Residues 235–307 (SGYGPEMRKR…AKRDVTYGYG (73 aa)) form an ARC6 binding region.

As to quaternary structure, interacts (via C-terminus) with ARC6 (via C-terminus) in the chloroplast intermembrane space; this interaction induces ARC6 homodimerization and leads to the formation of a heterotetramer containing two ARC6 and two PDV2 subunits. Interacts with ARC5/DRP5B. Mostly expressed in young leaves.

Its subcellular location is the plastid. It is found in the chloroplast outer membrane. In terms of biological role, component of the plastid division machinery consisting in a binary fission accomplished by the simultaneous constriction of the FtsZ ring on the stromal side of the inner envelope membrane, and the ARC5/DRP5B ring on the cytosolic side of the outer envelope membrane. Positive factor of chloroplast division required, with a dosage effect, to mediate the recruitment and dimerization of ARC5/DRP5B at the midplastid constriction site in the cytoplasm at plastid outer envelope membranes (OEMs). Prevents ARC5/DRP5B GTPase acrivity. Relays plastid division site position between stroma and outer surface via interactions with the cytoplasmic ARC5/DRP5B and the inner membrane ARC6 that recruits stromal FtsZ ring. Binding to phosphatidylinositol 4-phosphate (PI4P) modulates negatively chloroplast division. The sequence is that of Plastid division protein PDV2 from Arabidopsis thaliana (Mouse-ear cress).